A 119-amino-acid chain; its full sequence is Ribonuclease P protein component (119 aa).

It belongs to the RnpA family. As to quaternary structure, consists of a catalytic RNA component (M1 or rnpB) and a protein subunit.

It catalyses the reaction Endonucleolytic cleavage of RNA, removing 5'-extranucleotides from tRNA precursor.. RNaseP catalyzes the removal of the 5'-leader sequence from pre-tRNA to produce the mature 5'-terminus. It can also cleave other RNA substrates such as 4.5S RNA. The protein component plays an auxiliary but essential role in vivo by binding to the 5'-leader sequence and broadening the substrate specificity of the ribozyme. This chain is Ribonuclease P protein component, found in Borreliella burgdorferi (strain ATCC 35210 / DSM 4680 / CIP 102532 / B31) (Borrelia burgdorferi).